Reading from the N-terminus, the 400-residue chain is tRNA pseudouridine synthase Pus10 (400 aa).

One can recognise a THUMP domain in the interval 77–194 (QVYVELFGSP…DGSVSVQPRR (118 aa)). Residue tyrosine 301 participates in substrate binding.

Belongs to the pseudouridine synthase Pus10 family.

It carries out the reaction uridine(54) in tRNA = pseudouridine(54) in tRNA. The catalysed reaction is uridine(55) in tRNA = pseudouridine(55) in tRNA. Responsible for synthesis of pseudouridine from uracil-54 and uracil-55 in the psi GC loop of transfer RNAs. This Acidilobus saccharovorans (strain DSM 16705 / JCM 18335 / VKM B-2471 / 345-15) protein is tRNA pseudouridine synthase Pus10.